Consider the following 279-residue polypeptide: Probable endonuclease 4 (279 aa).

The Zn(2+) site is built by H69, H109, E145, D179, H182, H216, D229, H231, and E261.

Belongs to the AP endonuclease 2 family. Zn(2+) is required as a cofactor.

The catalysed reaction is Endonucleolytic cleavage to 5'-phosphooligonucleotide end-products.. Endonuclease IV plays a role in DNA repair. It cleaves phosphodiester bonds at apurinic or apyrimidinic (AP) sites, generating a 3'-hydroxyl group and a 5'-terminal sugar phosphate. This chain is Probable endonuclease 4, found in Serratia proteamaculans (strain 568).